A 291-amino-acid chain; its full sequence is Probable plasmid-partitioning protein ParB (291 aa).

It belongs to the ParB family.

This chain is Probable plasmid-partitioning protein ParB, found in Deinococcus radiodurans (strain ATCC 13939 / DSM 20539 / JCM 16871 / CCUG 27074 / LMG 4051 / NBRC 15346 / NCIMB 9279 / VKM B-1422 / R1).